Reading from the N-terminus, the 368-residue chain is MSTKRVLCKFFMHGACLKGEYCEFSHDWNDQPNNVCTFYQKGSCSYGSRCRYDHVKVSRNPTVAPPPSSSTTTRASSSLQPLSFGRPHHVGYQADSSNPRQQISMDVLAHSGSKPVWRNDFQHESVLEDGIDWSISPTVQNQTTLSPADLPICSFAAGGNCPYGEECPQMHGDLCTTCGKMCLHPYRPDEREEHTKLCEKNHKRLESLKRSQEIECSVCLDRVLSKPTAAERKFGLLSECDHPFCISCIRNWRNNSPTSGMDVNSALRACPICRKLSYYVIPSVLWYFSKEEKLEIIDNYKAKLKSIDCKYFDFGTGTCPFGSSCFYKHAYRDGRLEEVILRHLDADDGSTVIAKNIRLSDFLSRLHL.

C3H1-type zinc fingers lie at residues 2-29 and 30-57; these read STKR…HDWN and DQPN…HVKV. The disordered stretch occupies residues 58–81; sequence SRNPTVAPPPSSSTTTRASSSLQP. A compositionally biased stretch (low complexity) spans 69-78; it reads SSTTTRASSS. The C3H1-type 3 zinc finger occupies 147 to 174; sequence PADLPICSFAAGGNCPYGEECPQMHGDL. Positions 175 to 202 are makorin-type Cys-His; the sequence is CTTCGKMCLHPYRPDEREEHTKLCEKNH. The RING-type zinc finger occupies 216-274; that stretch reads CSVCLDRVLSKPTAAERKFGLLSECDHPFCISCIRNWRNNSPTSGMDVNSALRACPICR. The segment at 303–332 adopts a C3H1-type 4 zinc-finger fold; the sequence is KLKSIDCKYFDFGTGTCPFGSSCFYKHAYR.

Expressed in primary roots and leaves. Detected in vascular bundle tissues.

The enzyme catalyses S-ubiquitinyl-[E2 ubiquitin-conjugating enzyme]-L-cysteine + [acceptor protein]-L-lysine = [E2 ubiquitin-conjugating enzyme]-L-cysteine + N(6)-ubiquitinyl-[acceptor protein]-L-lysine.. It participates in protein modification; protein ubiquitination. E3 ubiquitin ligase catalyzing the covalent attachment of ubiquitin moieties onto substrate proteins. The chain is E3 ubiquitin-protein ligase makorin (MKRN) from Oryza sativa subsp. japonica (Rice).